A 179-amino-acid polypeptide reads, in one-letter code: Interleukin-22 (179 aa).

An N-terminal signal peptide occupies residues 1–33 (MAVLQKSMSFSLMGTLAASCLLLIALWAQEANA). Disulfide bonds link Cys40/Cys132 and Cys89/Cys178. 3 N-linked (GlcNAc...) asparagine glycosylation sites follow: Asn54, Asn68, and Asn97.

It belongs to the IL-10 family.

It localises to the secreted. Its function is as follows. Cytokine that plays a critical role in modulating tissue responses during inflammation. Plays an essential role in the regeneration of epithelial cells to maintain barrier function after injury and for the prevention of further tissue damage. Unlike most of the cytokines, has no effect on immune cells. Signals through a heterodimeric receptor composed of two subunits, the specific receptor IL22RA1 which is present on non-immune cells in many organs and the shared subunit IL10RB. Ligation of IL22RA1 with IL22 induces activation of the tyrosine kinases JAK1 and TYK2, which in turn activates STAT3. In turn, promotes cell survival and proliferation through STAT3, ERK1/2 and PI3K/AKT pathways. Promotes phosphorylation of GSK3B at 'Ser-9' and CTTN. Promotes epithelial cell spreading. In Mus musculus (Mouse), this protein is Interleukin-22 (Il22).